Reading from the N-terminus, the 128-residue chain is MSIRCVVVTPERTELDREADFVALPMFDGELGVQRGRAPMIGRLGYGVLRLQTVSGPERYFVDGGFAQVEDDVVNVLTGRAIPVDLLDNDEATKTLAEALDMPSSTPEQAQIKDAAVRRARGQLRASR.

The interval 98-128 (EALDMPSSTPEQAQIKDAAVRRARGQLRASR) is disordered. The span at 118 to 128 (RRARGQLRASR) shows a compositional bias: basic residues.

Belongs to the ATPase epsilon chain family. In terms of assembly, F-type ATPases have 2 components, CF(1) - the catalytic core - and CF(0) - the membrane proton channel. CF(1) has five subunits: alpha(3), beta(3), gamma(1), delta(1), epsilon(1). CF(0) has three main subunits: a, b and c.

It is found in the cell inner membrane. Produces ATP from ADP in the presence of a proton gradient across the membrane. In Rhodopirellula baltica (strain DSM 10527 / NCIMB 13988 / SH1), this protein is ATP synthase epsilon chain.